The sequence spans 197 residues: Inner membrane-spanning protein YciB (197 aa).

The next 5 helical transmembrane spans lie at 36–56, 64–84, 90–110, 135–155, and 162–182; these read IYSA…ALFL, GQWL…TFHS, WKAP…HFIG, LAWI…AFTF, and FKVF…GVYL.

It belongs to the YciB family.

Its subcellular location is the cell inner membrane. Its function is as follows. Plays a role in cell envelope biogenesis, maintenance of cell envelope integrity and membrane homeostasis. This chain is Inner membrane-spanning protein YciB, found in Pseudomonas putida (strain GB-1).